Consider the following 79-residue polypeptide: Acyl carrier protein (79 aa).

A Carrier domain is found at 2–77 (SNIEERVKKI…QAIDYINAHA (76 aa)). Residue S37 is modified to O-(pantetheine 4'-phosphoryl)serine.

This sequence belongs to the acyl carrier protein (ACP) family. In terms of processing, 4'-phosphopantetheine is transferred from CoA to a specific serine of apo-ACP by AcpS. This modification is essential for activity because fatty acids are bound in thioester linkage to the sulfhydryl of the prosthetic group.

It is found in the cytoplasm. It participates in lipid metabolism; fatty acid biosynthesis. Carrier of the growing fatty acid chain in fatty acid biosynthesis. This chain is Acyl carrier protein, found in Thioalkalivibrio sulfidiphilus (strain HL-EbGR7).